We begin with the raw amino-acid sequence, 284 residues long: ATP phosphoribosyltransferase (284 aa).

The protein belongs to the ATP phosphoribosyltransferase family. Long subfamily. As to quaternary structure, equilibrium between an active dimeric form, an inactive hexameric form and higher aggregates. Interconversion between the various forms is largely reversible and is influenced by the natural substrates and inhibitors of the enzyme. The cofactor is Mg(2+).

Its subcellular location is the cytoplasm. It carries out the reaction 1-(5-phospho-beta-D-ribosyl)-ATP + diphosphate = 5-phospho-alpha-D-ribose 1-diphosphate + ATP. Its pathway is amino-acid biosynthesis; L-histidine biosynthesis; L-histidine from 5-phospho-alpha-D-ribose 1-diphosphate: step 1/9. Its activity is regulated as follows. Feedback inhibited by histidine. Its function is as follows. Catalyzes the condensation of ATP and 5-phosphoribose 1-diphosphate to form N'-(5'-phosphoribosyl)-ATP (PR-ATP). Has a crucial role in the pathway because the rate of histidine biosynthesis seems to be controlled primarily by regulation of HisG enzymatic activity. The protein is ATP phosphoribosyltransferase of Mycobacterium avium (strain 104).